The chain runs to 471 residues: Glutamate--tRNA ligase (471 aa).

Positions 9–19 (PSPTGYLHVGG) match the 'HIGH' region motif. Residues C98, C100, C125, and H127 each contribute to the Zn(2+) site. Positions 237-241 (KLSKR) match the 'KMSKS' region motif. K240 provides a ligand contact to ATP.

This sequence belongs to the class-I aminoacyl-tRNA synthetase family. Glutamate--tRNA ligase type 1 subfamily. As to quaternary structure, monomer. The cofactor is Zn(2+).

The protein localises to the cytoplasm. The catalysed reaction is tRNA(Glu) + L-glutamate + ATP = L-glutamyl-tRNA(Glu) + AMP + diphosphate. In terms of biological role, catalyzes the attachment of glutamate to tRNA(Glu) in a two-step reaction: glutamate is first activated by ATP to form Glu-AMP and then transferred to the acceptor end of tRNA(Glu). The protein is Glutamate--tRNA ligase of Cronobacter sakazakii (strain ATCC BAA-894) (Enterobacter sakazakii).